The sequence spans 545 residues: Thermosome subunit beta (545 aa).

It belongs to the TCP-1 chaperonin family. In terms of assembly, forms a Heterooligomeric complex of two stacked eight-membered rings.

Functionally, molecular chaperone; binds unfolded polypeptides in vitro, and has a weak ATPase activity. This is Thermosome subunit beta (thsB) from Archaeoglobus fulgidus (strain ATCC 49558 / DSM 4304 / JCM 9628 / NBRC 100126 / VC-16).